Here is a 460-residue protein sequence, read N- to C-terminus: Elongation factor 1-alpha (460 aa).

Position 2 is a n,N,N-trimethylglycine (Gly2). N6,N6-dimethyllysine; alternate is present on Lys3. Lys3 is subject to N6-methyllysine; alternate. One can recognise a tr-type G domain in the interval Lys5–Ser240. The segment at Gly14–Ser21 is G1. Position 14 to 21 (Gly14 to Ser21) interacts with GTP. N6-methyllysine is present on Lys30. The tract at residues Gly70–Asp74 is G2. N6,N6,N6-trimethyllysine is present on Lys79. A G3 region spans residues Asp91 to Gly94. GTP-binding positions include Asp91–His95 and Asn153–Asp156. A G4 region spans residues Asn153–Asp156. Residues Ser192–Trp194 form a G5 region. Lys317 is modified (N6,N6-dimethyllysine; alternate). Lys317 carries the post-translational modification N6-methyllysine; alternate. At Lys391 the chain carries N6-methyllysine.

This sequence belongs to the TRAFAC class translation factor GTPase superfamily. Classic translation factor GTPase family. EF-Tu/EF-1A subfamily.

The protein localises to the cytoplasm. This protein promotes the GTP-dependent binding of aminoacyl-tRNA to the A-site of ribosomes during protein biosynthesis. The protein is Elongation factor 1-alpha (TEF) of Yarrowia lipolytica (strain CLIB 122 / E 150) (Yeast).